We begin with the raw amino-acid sequence, 211 residues long: Formate dehydrogenase, cytochrome b556(fdo) subunit (211 aa).

Residues 1 to 17 (MKRRDTIVRYTAPERIN) lie on the Cytoplasmic side of the membrane. His18 contacts heme b. Residues 18–32 (HWITAFCFILAAVSG) form a helical membrane-spanning segment. Residues 33–53 (LGFLFPSFNWLMQIMGTPQLA) lie on the Periplasmic side of the membrane. A helical membrane pass occupies residues 54 to 72 (RILHPFVGVVMFASFIIMF). His57 lines the heme b pocket. Over 73–112 (FRYWHHNLINRDDIFWAKNIRKIVVNEEVGDTGRYNFGQK) the chain is Cytoplasmic. A helical membrane pass occupies residues 113 to 130 (CVFWAAIIFLVLLLVSGV). At 131–151 (IIWRPYFAPAFSIPVIRFALM) the chain is on the periplasmic side. The helical transmembrane segment at 152–170 (LHSFAAVALIVVIMVHIYA) threads the bilayer. Residues His153 and His167 each contribute to the heme b site. Residues 171-211 (ALWVKGTITAMVEGWVTSAWAKKHHPRWYREVRKTTEKKAE) lie on the Cytoplasmic side of the membrane.

Belongs to the formate dehydrogenase gamma subunit family. As to quaternary structure, formate dehydrogenase is a membrane-bound complex, formed by subunits alpha, beta and gamma. The cofactor is heme.

The protein localises to the cell inner membrane. Its function is as follows. Allows to use formate as major electron donor during aerobic respiration. Subunit gamma is probably the cytochrome b556(FDO) component of the formate dehydrogenase. In Escherichia coli O157:H7, this protein is Formate dehydrogenase, cytochrome b556(fdo) subunit (fdoI).